A 419-amino-acid chain; its full sequence is Large ribosomal subunit protein uL4 (419 aa).

A2 carries the N-acetylalanine modification. An N6-acetyllysine modification is found at K14. R97 bears the Omega-N-methylarginine mark. Residue K106 is modified to N6-acetyllysine. K239 is covalently cross-linked (Glycyl lysine isopeptide (Lys-Gly) (interchain with G-Cter in SUMO2)). The residue at position 259 (K259) is an N6-acetyllysine. A Phosphothreonine modification is found at T266. 2 positions are modified to phosphoserine: S290 and S295. The residue at position 300 (R300) is a Citrulline. Residue K327 forms a Glycyl lysine isopeptide (Lys-Gly) (interchain with G-Cter in SUMO2) linkage. N6-acetyllysine is present on residues K333 and K353. N6-acetyllysine; alternate is present on K364. A Glycyl lysine isopeptide (Lys-Gly) (interchain with G-Cter in SUMO1); alternate cross-link involves residue K364. Over residues 364–379 (KSEKVVPEKGTADKKP) the composition is skewed to basic and acidic residues. The segment at 364-419 (KSEKVVPEKGTADKKPAVGKKGKKVDAKKQKPAGKKVVAKKPAEKKPTTEEKKPAA) is disordered. A Phosphoserine modification is found at S365. The span at 393-402 (QKPAGKKVVA) shows a compositional bias: basic residues. Residues 404–419 (KPAEKKPTTEEKKPAA) show a composition bias toward basic and acidic residues.

It belongs to the universal ribosomal protein uL4 family. As to quaternary structure, component of the large ribosomal subunit. May bind IPO9 with low affinity. Interacts with RBM3. Citrullinated by PADI4.

Its subcellular location is the cytoplasm. Functionally, component of the large ribosomal subunit. The ribosome is a large ribonucleoprotein complex responsible for the synthesis of proteins in the cell. This is Large ribosomal subunit protein uL4 (Rpl4) from Mus musculus (Mouse).